Here is a 315-residue protein sequence, read N- to C-terminus: MQIKLANPRGFCAGVDRAIEIVNRALEVFGPPIYVRHEVVHNKFVVEDLRSRGAIFVEELDQVPDDVIVIFSAHGVSQAVRQEAAGRGLKVFDATCPLVTKVHIEVAKYSRDGRECILIGHEGHPEVEGTMGQYDASNGGAIYLVEDEEDVARLQVRDPDNLAFVTQTTLSMDDTSRVIDALRTRFPNIGGPRKDDICYATQNRQDAVKQLAGECDVVLVVGSPNSSNSNRLRELAERMGTPAYLIDGAEDMQRGWFDQAARIGITAGASAPEVLVRGVIDQLKAWGATGAEELDGRPENITFSMPKELRVRSLI.

C12 provides a ligand contact to [4Fe-4S] cluster. (2E)-4-hydroxy-3-methylbut-2-enyl diphosphate is bound by residues H41 and H74. 2 residues coordinate dimethylallyl diphosphate: H41 and H74. The isopentenyl diphosphate site is built by H41 and H74. Residue C96 participates in [4Fe-4S] cluster binding. H124 provides a ligand contact to (2E)-4-hydroxy-3-methylbut-2-enyl diphosphate. H124 contacts dimethylallyl diphosphate. H124 contacts isopentenyl diphosphate. Catalysis depends on E126, which acts as the Proton donor. T168 contacts (2E)-4-hydroxy-3-methylbut-2-enyl diphosphate. C198 serves as a coordination point for [4Fe-4S] cluster. 4 residues coordinate (2E)-4-hydroxy-3-methylbut-2-enyl diphosphate: S226, S227, N228, and S270. Residues S226, S227, N228, and S270 each coordinate dimethylallyl diphosphate. Isopentenyl diphosphate contacts are provided by S226, S227, N228, and S270.

The protein belongs to the IspH family. Requires [4Fe-4S] cluster as cofactor.

It catalyses the reaction isopentenyl diphosphate + 2 oxidized [2Fe-2S]-[ferredoxin] + H2O = (2E)-4-hydroxy-3-methylbut-2-enyl diphosphate + 2 reduced [2Fe-2S]-[ferredoxin] + 2 H(+). The catalysed reaction is dimethylallyl diphosphate + 2 oxidized [2Fe-2S]-[ferredoxin] + H2O = (2E)-4-hydroxy-3-methylbut-2-enyl diphosphate + 2 reduced [2Fe-2S]-[ferredoxin] + 2 H(+). The protein operates within isoprenoid biosynthesis; dimethylallyl diphosphate biosynthesis; dimethylallyl diphosphate from (2E)-4-hydroxy-3-methylbutenyl diphosphate: step 1/1. It participates in isoprenoid biosynthesis; isopentenyl diphosphate biosynthesis via DXP pathway; isopentenyl diphosphate from 1-deoxy-D-xylulose 5-phosphate: step 6/6. Catalyzes the conversion of 1-hydroxy-2-methyl-2-(E)-butenyl 4-diphosphate (HMBPP) into a mixture of isopentenyl diphosphate (IPP) and dimethylallyl diphosphate (DMAPP). Acts in the terminal step of the DOXP/MEP pathway for isoprenoid precursor biosynthesis. The protein is 4-hydroxy-3-methylbut-2-enyl diphosphate reductase of Pseudomonas putida (strain W619).